Here is a 43-residue protein sequence, read N- to C-terminus: Truncated K3L homolog (43 aa).

It belongs to the orthopoxvirus OPG041 family.

The chain is Truncated K3L homolog (OPG041) from Cynomys gunnisoni (Gunnison's prairie dog).